We begin with the raw amino-acid sequence, 414 residues long: Solute carrier family 25 member 46-B (414 aa).

Over residues 1-13 (MQPRRPDRFDGLE) the composition is skewed to basic and acidic residues. The interval 1-89 (MQPRRPDRFD…AFGEENSGSS (89 aa)) is disordered. Residues 29–50 (YQSSFPARSLSSSGDLSQQWVT) show a composition bias toward polar residues. The stretch at 92 to 183 (QVNRFAGFGI…GMLSEFTHLP (92 aa)) is one Solcar 1 repeat. Transmembrane regions (helical) follow at residues 99-119 (FGIGLASLFTENVLAHPCIVL), 159-179 (MGSTFIVQGISLGAEGMLSEF), 198-218 (HLLLKGLVYVIVTPFYSASLI), 254-274 (LLPLLVLTFPTVLHGILHYII), 310-330 (FPELLANFAASLCADVLLYPL), and 379-399 (LGFYKGFGAVVVQYTLHAIVL). The stretch at 307–412 (EDYFPELLAN…KIIYSSVVQT (106 aa)) is one Solcar 2 repeat.

The protein belongs to the mitochondrial carrier (TC 2.A.29) family.

The protein localises to the mitochondrion outer membrane. May play a role in mitochondrial dynamics by controlling mitochondrial membrane fission. The protein is Solute carrier family 25 member 46-B (slc25a46-b) of Xenopus laevis (African clawed frog).